Consider the following 312-residue polypeptide: Ribosomal RNA small subunit methyltransferase H (312 aa).

S-adenosyl-L-methionine-binding positions include 32–34 (AGH), Asp-52, Phe-79, Asp-100, and Gln-107.

It belongs to the methyltransferase superfamily. RsmH family.

The protein resides in the cytoplasm. It catalyses the reaction cytidine(1402) in 16S rRNA + S-adenosyl-L-methionine = N(4)-methylcytidine(1402) in 16S rRNA + S-adenosyl-L-homocysteine + H(+). In terms of biological role, specifically methylates the N4 position of cytidine in position 1402 (C1402) of 16S rRNA. In Listeria monocytogenes serovar 1/2a (strain ATCC BAA-679 / EGD-e), this protein is Ribosomal RNA small subunit methyltransferase H.